A 355-amino-acid chain; its full sequence is Ataxin-3 (355 aa).

Residue Met-1 forms a Peptide (Met-Gly) (interchain with G-Cter in ubiquitin) linkage. In terms of domain architecture, Josephin spans 1–180 (MESIFHEKQE…DCEADQLLQM (180 aa)). Residue Cys-14 is the Nucleophile of the active site. The active-site Proton acceptor is the His-119. The active site involves Asn-134. Lys-200 is covalently cross-linked (Glycyl lysine isopeptide (Lys-Gly) (interchain with G-Cter in ubiquitin)). Phosphoserine is present on Ser-219. UIM domains follow at residues 224–243 (EDED…IDME) and 244–263 (DEEA…SSRS). Polar residues predominate over residues 257 to 275 (MQGSSRSMCENSPQTSSPD). Residues 257–355 (MQGSSRSMCE…KDNLKAERKK (99 aa)) form a disordered region. Phosphoserine occurs at positions 268, 272, and 273. Positions 279-289 (EELRRRREAYF) are enriched in basic and acidic residues. A Phosphoserine modification is found at Ser-321. In terms of domain architecture, UIM 3 spans 329–348 (SEEDMLRAAVTMSLETAKDN). Over residues 344 to 355 (TAKDNLKAERKK) the composition is skewed to basic and acidic residues.

As to quaternary structure, interacts with STUB1/CHIP (when monoubiquitinated). Interacts with DNA repair proteins RAD23A and RAD23B. Interacts with BECN1 (via its poly-Gln domain). Interacts with PRKN, UBR2, VCP and tubulin. In terms of processing, monoubiquitinated by UBE2W, possibly leading to activate the deubiquitinating enzyme activity.

It is found in the nucleus matrix. The protein localises to the nucleus. Its subcellular location is the lysosome membrane. It catalyses the reaction Thiol-dependent hydrolysis of ester, thioester, amide, peptide and isopeptide bonds formed by the C-terminal Gly of ubiquitin (a 76-residue protein attached to proteins as an intracellular targeting signal).. Its function is as follows. Deubiquitinating enzyme involved in protein homeostasis maintenance, transcription, cytoskeleton regulation, myogenesis and degradation of misfolded chaperone substrates. Binds long polyubiquitin chains and trims them, while it has weak or no activity against chains of 4 or less ubiquitins. Involved in degradation of misfolded chaperone substrates via its interaction with STUB1/CHIP: recruited to monoubiquitinated STUB1/CHIP, and restricts the length of ubiquitin chain attached to STUB1/CHIP substrates and preventing further chain extension. Interacts with key regulators of transcription and represses transcription: acts as a histone-binding protein that regulates transcription. Acts as a negative regulator of mTORC1 signaling in response to amino acid deprivation by mediating deubiquitination of RHEB, thereby promoting RHEB inactivation by the TSC-TBC complex. Regulates autophagy via the deubiquitination of 'Lys-402' of BECN1 leading to the stabilization of BECN1. This is Ataxin-3 (Atxn3) from Mus musculus (Mouse).